The sequence spans 239 residues: ATP synthase subunit a (239 aa).

5 helical membrane passes run 13 to 33 (IWFD…VFAF), 75 to 95 (FHLM…LGLV), 113 to 133 (DPIV…FFGM), 174 to 194 (GNIF…ASVG), and 208 to 230 (WVAF…SMVY).

Belongs to the ATPase A chain family. In terms of assembly, F-type ATPases have 2 components, CF(1) - the catalytic core - and CF(0) - the membrane proton channel. CF(1) has five subunits: alpha(3), beta(3), gamma(1), delta(1), epsilon(1). CF(0) has three main subunits: a(1), b(2) and c(9-12). The alpha and beta chains form an alternating ring which encloses part of the gamma chain. CF(1) is attached to CF(0) by a central stalk formed by the gamma and epsilon chains, while a peripheral stalk is formed by the delta and b chains.

Its subcellular location is the cell membrane. In terms of biological role, key component of the proton channel; it plays a direct role in the translocation of protons across the membrane. The chain is ATP synthase subunit a from Enterococcus faecalis (strain ATCC 700802 / V583).